The chain runs to 121 residues: uncharacterized protein (121 aa).

This is an uncharacterized protein from Methanocaldococcus jannaschii (strain ATCC 43067 / DSM 2661 / JAL-1 / JCM 10045 / NBRC 100440) (Methanococcus jannaschii).